The chain runs to 184 residues: Photosystem I assembly protein Ycf4 (184 aa).

2 helical membrane-spanning segments follow: residues 24 to 44 and 57 to 77; these read WAFILFLGSLGFLLVGTSSYI and IIFFPQGIVMSFYGIAGLFIS.

It belongs to the Ycf4 family.

The protein localises to the plastid. It is found in the chloroplast thylakoid membrane. Seems to be required for the assembly of the photosystem I complex. This chain is Photosystem I assembly protein Ycf4, found in Buxus microphylla (Littleleaf boxwood).